Here is a 291-residue protein sequence, read N- to C-terminus: 4-diphosphocytidyl-2-C-methyl-D-erythritol kinase (291 aa).

Lys-8 is an active-site residue. An ATP-binding site is contributed by 89–99 (PIGAGVGGGSS). Asp-131 is an active-site residue.

It belongs to the GHMP kinase family. IspE subfamily.

The catalysed reaction is 4-CDP-2-C-methyl-D-erythritol + ATP = 4-CDP-2-C-methyl-D-erythritol 2-phosphate + ADP + H(+). It participates in isoprenoid biosynthesis; isopentenyl diphosphate biosynthesis via DXP pathway; isopentenyl diphosphate from 1-deoxy-D-xylulose 5-phosphate: step 3/6. Functionally, catalyzes the phosphorylation of the position 2 hydroxy group of 4-diphosphocytidyl-2C-methyl-D-erythritol. The polypeptide is 4-diphosphocytidyl-2-C-methyl-D-erythritol kinase (Chlamydia caviae (strain ATCC VR-813 / DSM 19441 / 03DC25 / GPIC) (Chlamydophila caviae)).